We begin with the raw amino-acid sequence, 381 residues long: Cytochrome b (381 aa).

The next 4 membrane-spanning stretches (helical) occupy residues 33–53 (FGSL…FLAM), 77–98 (WLIR…FLHV), 113–133 (WNIG…GYVL), and 178–198 (FFAF…VHLL). Residues H83 and H97 each contribute to the heme b site. Heme b-binding residues include H182 and H196. Residue H201 participates in a ubiquinone binding. Transmembrane regions (helical) follow at residues 226 to 246 (IKDA…ALFS), 288 to 308 (LGGV…PLLH), 320 to 340 (VSQT…WIGG), and 347 to 367 (FIII…VLMP).

Belongs to the cytochrome b family. In terms of assembly, the cytochrome bc1 complex contains 11 subunits: 3 respiratory subunits (MT-CYB, CYC1 and UQCRFS1), 2 core proteins (UQCRC1 and UQCRC2) and 6 low-molecular weight proteins (UQCRH/QCR6, UQCRB/QCR7, UQCRQ/QCR8, UQCR10/QCR9, UQCR11/QCR10 and a cleavage product of UQCRFS1). This cytochrome bc1 complex then forms a dimer. Requires heme b as cofactor.

It is found in the mitochondrion inner membrane. In terms of biological role, component of the ubiquinol-cytochrome c reductase complex (complex III or cytochrome b-c1 complex) that is part of the mitochondrial respiratory chain. The b-c1 complex mediates electron transfer from ubiquinol to cytochrome c. Contributes to the generation of a proton gradient across the mitochondrial membrane that is then used for ATP synthesis. This Ningaui yvonnae (Southern ningaui) protein is Cytochrome b (MT-CYB).